A 235-amino-acid polypeptide reads, in one-letter code: Calcium-activated potassium channel subunit beta-2 (235 aa).

The segment at 1 to 45 is ball and chain; that stretch reads MFIWTSGRTSSSYRHDEKRNIYQKIRDHDLLDKRKTVTALKAGED. Residues 1-46 are Cytoplasmic-facing; the sequence is MFIWTSGRTSSSYRHDEKRNIYQKIRDHDLLDKRKTVTALKAGEDR. The helical transmembrane segment at 47–67 threads the bilayer; it reads AILLGLAMMVCSIMMYFLLGI. At 68–194 the chain is on the extracellular side; that stretch reads TLLRSYMQSV…VILTKLYSSN (127 aa). Residues N88, N96, and N119 are each glycosylated (N-linked (GlcNAc...) asparagine). Residues 195–215 form a helical membrane-spanning segment; that stretch reads VLFHSLFWPTCMMAGGVAIVA. Residues 216–235 lie on the Cytoplasmic side of the membrane; that stretch reads MVKLTQYLSLLCERIQRINR.

It belongs to the KCNMB (TC 8.A.14.1) family. KCNMB2 subfamily. Interacts with KCNMA1 tetramer. There are probably 4 molecules of KCMNB2 per KCNMA1 tetramer. N-glycosylated. Expressed in kidney, heart and brain. Highly expressed in ovary. Expressed at low level in other tissues.

It localises to the membrane. Its function is as follows. Regulatory subunit of the calcium activated potassium KCNMA1 (maxiK) channel. Modulates the calcium sensitivity and gating kinetics of KCNMA1, thereby contributing to KCNMA1 channel diversity. Acts as a negative regulator that confers rapid and complete inactivation of KCNMA1 channel complex. May participate in KCNMA1 inactivation in chromaffin cells of the adrenal gland or in hippocampal CA1 neurons. In Homo sapiens (Human), this protein is Calcium-activated potassium channel subunit beta-2 (KCNMB2).